A 318-amino-acid chain; its full sequence is Leucine-rich repeat domain-containing protein YddK (318 aa).

LRR repeat units lie at residues 109-129 (NFTSINLDNNQFTHFDATNYD), 130-151 (RLVKLSLNSNALESINFPQGRN), 153-173 (SITHISMNNNALRNIDIDRLS), 174-194 (SVTYFSAAHNQLEFVQLESCE), 195-216 (WLQYLNLSHNQLTDIVAGNKNE), 217-237 (LLLLDLSHNKLTSLHNDLFPN), 238-258 (LNTLLINNNLLSEIKIFYSNF), 260-280 (NVQTLNAANNQLKYINLDFLT), and 284-305 (SIKSLRLDNNKITHIDTNNTSD).

This Escherichia coli (strain K12) protein is Leucine-rich repeat domain-containing protein YddK (yddK).